The primary structure comprises 239 residues: Interleukin-27 subunit alpha (239 aa).

The first 28 residues, 1–28 (MGQMADDLGWRLSLLLLSLLLARAGVWG), serve as a signal peptide directing secretion. A glycan (N-linked (GlcNAc...) asparagine) is linked at Asn89. A disordered region spans residues 167 to 186 (EEENEAGRELLPGAPGGPSK).

It belongs to the IL-6 superfamily. Heterodimer with EBI3; not disulfide-linked. This heterodimer is known as interleukin IL-27. O-glycosylated.

Its subcellular location is the secreted. Associates with EBI3 to form the IL-27 interleukin, a heterodimeric cytokine which functions in innate immunity. Cytokine with pro- and anti-inflammatory properties, that can regulate T-helper cell development, suppress T-cell proliferation, stimulate cytotoxic T-cell activity, induce isotype switching in B-cells, and that has diverse effects on innate immune cells. Among its target cells are CD4 T-helper cells which can differentiate in type 1 effector cells (TH1), type 2 effector cells (TH2) and IL17 producing helper T-cells (TH17). It drives rapid clonal expansion of naive but not memory CD4 T-cells. It also strongly synergizes with IL-12 to trigger interferon-gamma/IFN-gamma production of naive CD4 T-cells, binds to the cytokine receptor WSX-1/TCCR which appears to be required but not sufficient for IL-27-mediated signal transduction. IL-27 potentiate the early phase of TH1 response and suppress TH2 and TH17 differentiation. It induces the differentiation of TH1 cells via two distinct pathways, p38 MAPK/TBX21- and ICAM1/ITGAL/ERK-dependent pathways. It also induces STAT1, STAT3, STAT4 and STAT5 phosphorylation and activates TBX21/T-Bet via STAT1 with resulting IL12RB2 up-regulation, an event crucial to TH1 cell commitment. It suppresses the expression of GATA3, the inhibitor TH1 cells development. In CD8 T-cells, it activates STATs as well as GZMB. IL-27 reveals to be a potent inhibitor of TH17 cell development and of IL-17 production. Indeed IL27 alone is also able to inhibit the production of IL17 by CD4 and CD8 T-cells. While IL-27 suppressed the development of pro-inflammatory Th17 cells via STAT1, it inhibits the development of anti-inflammatory inducible regulatory T-cells, iTreg, independently of STAT1. IL-27 also has an effect on cytokine production, it suppresses pro-inflammatory cytokine production such as IL2, IL4, IL5 and IL6 and activates suppressors of cytokine signaling such as SOCS1 and SOCS3. Apart from suppression of cytokine production, IL-27 also antagonizes the effects of some cytokines such as IL6 through direct effects on T-cells. Another important role of IL-27 is its antitumor activity as well as its antiangiogenic activity with activation of production of antiangiogenic chemokines such as IP-10/CXCL10 and MIG/CXCL9. In vein endothelial cells, it induces IRF1/interferon regulatory factor 1 and increase the expression of MHC class II transactivator/CIITA with resulting up-regulation of major histocompatibility complex class II. This chain is Interleukin-27 subunit alpha (IL27), found in Sus scrofa (Pig).